We begin with the raw amino-acid sequence, 206 residues long: RNA-binding protein (206 aa).

Residues 87–206 (PRGMQRGNRR…SGAKSKRRPR (120 aa)) are disordered. Basic and acidic residues predominate over residues 109-132 (MPKDDSNDRKKAKTSKDRKVEKSS).

This sequence belongs to the phytoreovirus RNA-binding protein family.

It localises to the host cytoplasm. Functionally, constituent of viral factories. Binds to ssRNA and dsRNA. This chain is RNA-binding protein, found in Rice gall dwarf virus (RGDV).